We begin with the raw amino-acid sequence, 552 residues long: Carboxypeptidase Y homolog A (552 aa).

A signal peptide spans 1–18 (MRIATSTLLVGAASAAFA). The propeptide occupies 19–133 (PQDGTQRVLN…KLDNYNLRAR (115 aa)). 5 cysteine pairs are disulfide-bonded: Cys187/Cys427, Cys321/Cys335, Cys345/Cys368, Cys352/Cys361, and Cys390/Cys397. The N-linked (GlcNAc...) asparagine glycan is linked to Asn218. The active site involves Ser274. Asp466 is an active-site residue. N-linked (GlcNAc...) asparagine glycosylation occurs at Asn516. His527 is a catalytic residue.

This sequence belongs to the peptidase S10 family.

The protein resides in the vacuole. It catalyses the reaction Release of a C-terminal amino acid with broad specificity.. Functionally, vacuolar carboxypeptidase involved in degradation of small peptides. Digests preferentially peptides containing an aliphatic or hydrophobic residue in P1' position, as well as methionine, leucine or phenylalanine in P1 position of ester substrate. The polypeptide is Carboxypeptidase Y homolog A (CPYA) (Pyricularia oryzae (strain 70-15 / ATCC MYA-4617 / FGSC 8958) (Rice blast fungus)).